A 147-amino-acid polypeptide reads, in one-letter code: Helix-loop-helix protein 13 (147 aa).

Positions 41 to 93 (EERQTASIRERKRMCSINVAFIELRNYIPTFPYEKRLSKIDTLNLAIAYINML) constitute a bHLH domain.

In terms of tissue distribution, expressed in hermaphrodite dopaminergic neurons (ADE, CEP, and PDE).

The protein resides in the nucleus. It is found in the cytoplasm. Transcriptional activator. Shown to have a role in the negative regulation of exit from L1 arrest and dauer diapause dependent on IIS signaling (insulin and insulin-like growth factor (IGF) signaling). Hypodermal expression is regulated by IIS/daf-16 while neuronal expression is not under the control of IIS/daf-16. The polypeptide is Helix-loop-helix protein 13 (Caenorhabditis elegans).